The following is a 634-amino-acid chain: Carbon monoxide dehydrogenase 2 (634 aa).

[4Fe-4S] cluster contacts are provided by Cys44, Cys53, Cys56, Cys61, and Cys73. [Ni-4Fe-5S] cluster-binding residues include His264, Cys343, Cys453, Cys484, and Cys525.

This sequence belongs to the Ni-containing carbon monoxide dehydrogenase family. Homodimer. The cofactor is [4Fe-4S] cluster. Requires [Ni-4Fe-5S] cluster as cofactor.

It catalyses the reaction CO + 2 oxidized [2Fe-2S]-[ferredoxin] + H2O = 2 reduced [2Fe-2S]-[ferredoxin] + CO2 + 2 H(+). CODH oxidizes carbon monoxide coupled, via CooF, to the reduction of a hydrogen cation by a hydrogenase (possibly CooH). The sequence is that of Carbon monoxide dehydrogenase 2 (cooS2) from Methanosarcina mazei (strain ATCC BAA-159 / DSM 3647 / Goe1 / Go1 / JCM 11833 / OCM 88) (Methanosarcina frisia).